Reading from the N-terminus, the 466-residue chain is Fez family zinc finger protein 1 (466 aa).

Positions 34-49 (PLAFSIERIMSRTPEP) match the Engrailed homology 1 repressor motif. 6 consecutive C2H2-type zinc fingers follow at residues 261-283 (FTCE…MPVH), 289-311 (FVCK…KIIH), 317-339 (HKCN…TRIH), 345-367 (FVCE…KLTH), 373-395 (FKCN…MHTH), and 401-424 (FTCP…RKLH). Residues 446-466 (LPNREQSHTIIQSPQLQKSVY) are disordered. Positions 453 to 466 (HTIIQSPQLQKSVY) are enriched in polar residues.

The protein belongs to the krueppel C2H2-type zinc-finger protein family.

The protein resides in the nucleus. In terms of biological role, transcription repressor. Involved in the development of the forebrain region. This is Fez family zinc finger protein 1 (fezf1) from Xenopus laevis (African clawed frog).